Here is a 195-residue protein sequence, read N- to C-terminus: uncharacterized protein (195 aa).

The signal sequence occupies residues 1–17 (MKASLITAFVLPLLALA). Residue asparagine 75 is glycosylated (N-linked (GlcNAc...) asparagine).

The protein resides in the secreted. This is an uncharacterized protein from Arthroderma benhamiae (strain ATCC MYA-4681 / CBS 112371) (Trichophyton mentagrophytes).